A 156-amino-acid polypeptide reads, in one-letter code: 17 kDa lipoprotein (156 aa).

The N-terminal stretch at 1–21 (MKGSVRALCAFLGVGALGSAL) is a signal peptide. C22 carries the N-palmitoyl cysteine lipid modification. C22 carries S-diacylglycerol cysteine lipidation.

Its subcellular location is the cell membrane. The polypeptide is 17 kDa lipoprotein (tpp17) (Treponema pallidum (strain Nichols)).